The chain runs to 880 residues: Valine--tRNA ligase (880 aa).

Residues 48–58 (PNVTGKLHLGH) carry the 'HIGH' region motif. Residues 524–528 (KMSKS) carry the 'KMSKS' region motif. Residue K527 participates in ATP binding. The stretch at 808-879 (LAGLINIEEE…VKERIAQLRS (72 aa)) forms a coiled coil.

This sequence belongs to the class-I aminoacyl-tRNA synthetase family. ValS type 1 subfamily. As to quaternary structure, monomer.

The protein resides in the cytoplasm. It carries out the reaction tRNA(Val) + L-valine + ATP = L-valyl-tRNA(Val) + AMP + diphosphate. In terms of biological role, catalyzes the attachment of valine to tRNA(Val). As ValRS can inadvertently accommodate and process structurally similar amino acids such as threonine, to avoid such errors, it has a 'posttransfer' editing activity that hydrolyzes mischarged Thr-tRNA(Val) in a tRNA-dependent manner. This Enterococcus faecalis (strain ATCC 700802 / V583) protein is Valine--tRNA ligase.